The sequence spans 145 residues: Transmembrane protein 170A (145 aa).

Residues 1-50 (MIEALIVGEMQDVQIGFVKQILSLNLVPRSNNTTCGNNTSLCDFSEMWYG) are Lumenal-facing. 2 N-linked (GlcNAc...) asparagine glycosylation sites follow: Asn31 and Asn37. Residues 51–71 (VFLWAVVSSLIFHLPAALLAL) form a helical membrane-spanning segment. At 72 to 81 (ATLRRHKVAR) the chain is on the cytoplasmic side. A helical membrane pass occupies residues 82–102 (FFPLGILLMGIIGPLFGGVLT). Over 103-117 (SAAIAGVYKAAGKSM) the chain is Lumenal. The chain crosses the membrane as a helical span at residues 118 to 138 (FSLEALVFGVGQSLFIFIISF). Topologically, residues 139 to 145 (LRILATL) are cytoplasmic.

The protein belongs to the TMEM170 family.

The protein resides in the endoplasmic reticulum membrane. Its subcellular location is the nucleus envelope. May regulate membrane morphogenesis in the endoplasmic reticulum (ER) by promoting ER sheet formation at the expense of ER tubules. This chain is Transmembrane protein 170A (tmem170a), found in Danio rerio (Zebrafish).